Reading from the N-terminus, the 210-residue chain is Ras-related protein Rab-43 (210 aa).

23-30 (GDASVGKT) contacts GTP. The short motif at 45-53 (QGSTIGVDF) is the Effector region element. Phosphoserine is present on Ser-47. 71–75 (DTAGQ) serves as a coordination point for GTP. Residue Thr-80 is modified to Phosphothreonine. GTP contacts are provided by residues 129-132 (NKSD) and 161-162 (AK). 2 S-geranylgeranyl cysteine lipidation sites follow: Cys-208 and Cys-210. Position 210 is a cysteine methyl ester (Cys-210).

The protein belongs to the small GTPase superfamily. Rab family. Interacts with GDI1, GDI2 and CHM; phosphorylation at Thr-80 disrupts these interactions.

It localises to the cytoplasmic vesicle. The protein localises to the phagosome. The protein resides in the phagosome membrane. It is found in the golgi apparatus. Its subcellular location is the trans-Golgi network membrane. It localises to the trans-Golgi network. In terms of biological role, the small GTPases Rab are key regulators of intracellular membrane trafficking, from the formation of transport vesicles to their fusion with membranes. Rabs cycle between an inactive GDP-bound form and an active GTP-bound form that is able to recruit to membranes different set of downstream effectors directly responsible for vesicle formation, movement, tethering and fusion. The low intrinsic GTPase activity of RAB43 is activated by USP6NL. Involved in retrograde transport from the endocytic pathway to the Golgi apparatus. Involved in the transport of Shiga toxin from early and recycling endosomes to the trans-Golgi network. Required for the structural integrity of the Golgi complex. Plays a role in the maturation of phagosomes that engulf pathogens, such as S.aureus and Mycobacterium. The protein is Ras-related protein Rab-43 (Rab43) of Rattus norvegicus (Rat).